Consider the following 225-residue polypeptide: UPF0758 protein XCV4028 (225 aa).

In terms of domain architecture, MPN spans 102–224 (ALSDPPSVGR…PVSFAERGWL (123 aa)). Zn(2+) is bound by residues histidine 173, histidine 175, and aspartate 186. Positions 173–186 (HNHPSGNPEPSEAD) match the JAMM motif motif.

It belongs to the UPF0758 family.

The sequence is that of UPF0758 protein XCV4028 from Xanthomonas euvesicatoria pv. vesicatoria (strain 85-10) (Xanthomonas campestris pv. vesicatoria).